A 333-amino-acid polypeptide reads, in one-letter code: L-lactate dehydrogenase B chain (333 aa).

Residues 29 to 57 (GQVGMACAISILGKGLCDELALVDVLEDK) and R99 each bind NAD(+). Substrate-binding residues include R106, N138, and R169. N138 provides a ligand contact to NAD(+). H193 acts as the Proton acceptor in catalysis. A substrate-binding site is contributed by T248.

Belongs to the LDH/MDH superfamily. LDH family. In terms of assembly, homotetramer.

It localises to the cytoplasm. The enzyme catalyses (S)-lactate + NAD(+) = pyruvate + NADH + H(+). It participates in fermentation; pyruvate fermentation to lactate; (S)-lactate from pyruvate: step 1/1. Its function is as follows. Interconverts simultaneously and stereospecifically pyruvate and lactate with concomitant interconversion of NADH and NAD(+). This chain is L-lactate dehydrogenase B chain (LDHB), found in Gallus gallus (Chicken).